The following is a 1063-amino-acid chain: Endo-1,4-beta-xylanase 2 (1063 aa).

4 CBM-cenC domains span residues 5–146 (NIVM…GPAP), 183–313 (NIIK…LEGP), 348–482 (NHIF…IEGP), and 517–662 (NIVS…QGPS). Residues 711–1006 (SGATVKIRQT…NEAGKRFLEI (296 aa)) form the GH10 domain. Glu840 acts as the Proton donor in catalysis. Catalysis depends on Glu941, which acts as the Nucleophile.

Belongs to the glycosyl hydrolase 10 (cellulase F) family.

It carries out the reaction Endohydrolysis of (1-&gt;4)-beta-D-xylosidic linkages in xylans.. It functions in the pathway glycan degradation; xylan degradation. In terms of biological role, binds to and hydrolyzes insoluble and soluble xylan substrates. This is Endo-1,4-beta-xylanase 2 from Arabidopsis thaliana (Mouse-ear cress).